Consider the following 804-residue polypeptide: DEP domain-containing protein 1A (804 aa).

Residues 24-108 (FRVGMPLRKH…DNNQLFRFPA (85 aa)) enclose the DEP domain. In terms of domain architecture, Rho-GAP spans 282–322 (DYFLNLPEPLLTFEYYELFVNILVVCGYITVSDRTSGIHKI). Position 513 is a phosphoserine (Ser513). An interaction with ZNF224 region spans residues 592–647 (AINALQLCCLLLPPPNRRKLQLLMRMISRMSQNVDMPKLHEQIGTRSLMINTFSRC). Residues 726–760 (EQKISTSQAAIAELLENIVRSKSLSLKEKRRKLKQ) adopt a coiled-coil conformation.

As to quaternary structure, can form dimers. Interacts with ZNF224.

The protein localises to the nucleus. Functionally, may be involved in transcriptional regulation as a transcriptional corepressor. The DEPDC1A-ZNF224 complex may play a critical role in bladder carcinogenesis by repressing the transcription of the A20 gene, leading to transport of NF-KB protein into the nucleus, resulting in suppression of apoptosis of bladder cancer cells. This Mus musculus (Mouse) protein is DEP domain-containing protein 1A (Depdc1a).